Reading from the N-terminus, the 419-residue chain is MTTQLEQAWELAKQRFAAVGIDVEEALRQLDRLPVSMHCWQSDDVSGFENPEGLLTGGIQATGNYPGKARNASELRADLEQAMRLIPGPKRLNLHAIYLESDTPVSRDQIKPEHFKNWVEWAKANQLGLDFNPSCFSHPLSADGFTLSHADDRIRQFWIDHCKASRRVSAYFGEQLGTPSVMNIWIPDGMKDITVDRLAPRQRLLAALDEVISEKLNPAHHIDAVESKLFGIGAESYTVGSNEFYLGYATSRQTALCLDAGHFHPTEVISDKISAAMLYVPQLLLHVSRPVRWDSDHVVLLDDETQAIASEIVRHDLFDQVHIGLDFFDASINRIAAWVIGTRNMKKALLRALLEPTAELRKLEAAGDYTARLALLEEQKSLPWQAVWEMYCQRHDTPAGSEWLENVRTYEKEILSRRG.

3 residues coordinate Mn(2+): His-262, Asp-294, and Asp-296.

It belongs to the rhamnose isomerase family. Homotetramer. Mn(2+) is required as a cofactor.

Its subcellular location is the cytoplasm. The enzyme catalyses L-rhamnopyranose = L-rhamnulose. Its pathway is carbohydrate degradation; L-rhamnose degradation; glycerone phosphate from L-rhamnose: step 1/3. Its function is as follows. Catalyzes the interconversion of L-rhamnose and L-rhamnulose. The protein is L-rhamnose isomerase of Escherichia coli O81 (strain ED1a).